The sequence spans 216 residues: MASPLLPTSTTPDQLPGGDPQLLSSLRVLLSRVLATVRHASADARPWAELVDRSAFSRPPSLSEATSRVRKNFSYFRANYITLVAILLAASLLTHPFALFLLASLAASWLFLYFFRPADQPLVIGGRTFSDLETLGILCLSTVVVMFMTSVGSLLMSTLAVGIMGVAIHGAFRAPEDLFLEEQEAIGSGLFAFFNNNASNAAAAAIATSAMSRVRV.

At A2 the chain carries N-acetylalanine. 5 consecutive transmembrane segments (helical) span residues L83–A103, L105–G125, L135–L155, L159–F179, and I186–I206.

This sequence belongs to the PRA1 family. Interacts with PRA1B1, PRA1B2, PRA1B3, PRA1B4, PRA1B5 and PRA1E. In terms of tissue distribution, expressed in hypocotyls, roots, lateral roots, lateral root caps, columella cells, leaves and stomata.

The protein resides in the endoplasmic reticulum membrane. Functionally, may be involved in both secretory and endocytic intracellular trafficking in the endosomal/prevacuolar compartments. The protein is PRA1 family protein B6 (PRA1B6) of Arabidopsis thaliana (Mouse-ear cress).